An 816-amino-acid chain; its full sequence is Ribonucleoside-diphosphate reductase large subunit (816 aa).

The ATP-cone domain maps to 1–92; the sequence is MYVVKRDGRQ…VSNLHKNTKK (92 aa). ATP contacts are provided by residues 5–6, 11–17, T53, and D57; these read KR and ETVHFDK. GDP contacts are provided by S202 and S217. An intrachain disulfide couples C218 to C444. DTTP contacts are provided by residues 226 to 228, K243, R256, and 263 to 264; these read DSI and RG. N427 is a GDP binding site. N427 serves as the catalytic Proton acceptor. The Cysteine radical intermediate role is filled by C429. GDP contacts are provided by residues E431 and 623–626; that span reads TAST. E431 acts as the Proton acceptor in catalysis.

It belongs to the ribonucleoside diphosphate reductase large chain family. In terms of assembly, heterotetramer of two large/R1 and two small/R2 subunits. A radical transfer pathway may occur between 'Tyr-125' of protein R2 and R1. In terms of processing, contains a disulfide bonds. Binding of the substrate occurs primarily when the active-site cysteines are reduced. Highly expressed in actively growing tissues such as young leaves, shoot apices, inflorescences and carpels. Very low expression in cotyledons, adult and cauline leaves and senescent leaves.

The protein localises to the cytoplasm. It catalyses the reaction a 2'-deoxyribonucleoside 5'-diphosphate + [thioredoxin]-disulfide + H2O = a ribonucleoside 5'-diphosphate + [thioredoxin]-dithiol. With respect to regulation, under complex allosteric control mediated by deoxynucleoside triphosphates and ATP binding to separate specificity and activation sites on the large subunit. The type of nucleotide bound at the specificity site determines substrate preference. It seems probable that ATP makes the enzyme reduce CDP and UDP, dGTP favors ADP reduction and dTTP favors GDP reduction. Stimulated by ATP and inhibited by dATP binding to the activity site. Its function is as follows. Provides the precursors necessary for DNA synthesis. Catalyzes the biosynthesis of deoxyribonucleotides from the corresponding ribonucleotides. R1 contains the binding sites for both substrates and allosteric effectors and carries out the actual reduction of the ribonucleotide. Ribonucleotide reductase (RNR) complex function is essential for efficient organellar DNA degradation in pollen. Involved in chloroplast division. The polypeptide is Ribonucleoside-diphosphate reductase large subunit (Arabidopsis thaliana (Mouse-ear cress)).